The following is a 252-amino-acid chain: Enolase-phosphatase E1 (252 aa).

Mg(2+) contacts are provided by aspartate 14 and glutamate 16. Substrate-binding positions include 143 to 144 (SS) and lysine 177. A Mg(2+)-binding site is contributed by aspartate 202.

It belongs to the HAD-like hydrolase superfamily. MasA/MtnC family. As to quaternary structure, monomer. The cofactor is Mg(2+).

The protein resides in the cytoplasm. The protein localises to the nucleus. The catalysed reaction is 5-methylsulfanyl-2,3-dioxopentyl phosphate + H2O = 1,2-dihydroxy-5-(methylsulfanyl)pent-1-en-3-one + phosphate. It functions in the pathway amino-acid biosynthesis; L-methionine biosynthesis via salvage pathway; L-methionine from S-methyl-5-thio-alpha-D-ribose 1-phosphate: step 3/6. Its pathway is amino-acid biosynthesis; L-methionine biosynthesis via salvage pathway; L-methionine from S-methyl-5-thio-alpha-D-ribose 1-phosphate: step 4/6. Bifunctional enzyme that catalyzes the enolization of 2,3-diketo-5-methylthiopentyl-1-phosphate (DK-MTP-1-P) into the intermediate 2-hydroxy-3-keto-5-methylthiopentenyl-1-phosphate (HK-MTPenyl-1-P), which is then dephosphorylated to form the acireductone 1,2-dihydroxy-3-keto-5-methylthiopentene (DHK-MTPene). The chain is Enolase-phosphatase E1 from Drosophila persimilis (Fruit fly).